We begin with the raw amino-acid sequence, 768 residues long: Pentatricopeptide repeat-containing protein At4g01030, mitochondrial (768 aa).

A mitochondrion-targeting transit peptide spans 1-25; sequence MYRFLGLTIHGGLIKRGLDNSDTRV. 16 PPR repeats span residues 22 to 52, 53 to 87, 88 to 122, 123 to 153, 154 to 188, 189 to 223, 224 to 254, 259 to 289, 290 to 324, 325 to 359, 360 to 394, 395 to 429, 430 to 460, 461 to 495, 496 to 526, and 532 to 562; these read DTRVVSASMGFYGRCVSLGFANKLFDEMPKR, DDLAWNEIVMVNLRSGNWEKAVELFREMQFSGAKA, YDSTMVKLLQVCSNKEGFAEGRQIHGYVLRLGLES, NVSMCNSLIVMYSRNGKLELSRKVFNSMKDR, NLSSWNSILSSYTKLGYVDDAIGLLDEMEICGLKP, DIVTWNSLLSGYASKGLSKDAIAVLKRMQIAGLKP, STSSISSLLQAVAEPGHLKLGKAIHGYILRN, DVYVETTLIDMYIKTGYLPYARMVFDMMDAK, NIVAWNSLVSGLSYACLLKDAEALMIRMEKEGIKP, DAITWNSLASGYATLGKPEKALDVIGKMKEKGVAP, NVVSWTAIFSGCSKNGNFRNALKVFIKMQEEGVGP, NAATMSTLLKILGCLSLLHSGKEVHGFCLRKNLIC, DAYVATALVDMYGKSGDLQSAIEIFWGIKNK, SLASWNCMLMGYAMFGRGEEGIAAFSVMLEAGMEP, DAITFTSVLSVCKNSGLVQEGWKYFDLMRSR, and TIEHCSCMVDLLGRSGYLDEAWDFIQTMSLK. Residues 567 to 642 are type E motif; it reads IWGAFLSSCK…QDLWSWIQID (76 aa). The segment at 643 to 673 is type E(+) motif; it reads QTVHIFYAEGKTHPDEGDIYFELYKLVSEMK. The segment at 674 to 768 is type DYW motif; sequence KSGYVPDTSC…DGKCSCNDSW (95 aa).

The protein belongs to the PPR family. PCMP-H subfamily.

It is found in the mitochondrion. This is Pentatricopeptide repeat-containing protein At4g01030, mitochondrial (PCMP-H65) from Arabidopsis thaliana (Mouse-ear cress).